Reading from the N-terminus, the 743-residue chain is Merozoite surface protein 9 (743 aa).

The first 23 residues, 1–23, serve as a signal peptide directing secretion; that stretch reads MMNMKIVLFSLLLFVIRWNIISC. Positions 77 to 235 are interaction with MSP1 and host SLC4A1/Band 3; sequence KELLKEKQYT…VNDEDDVNDE (159 aa). Disordered stretches follow at residues 202 to 282, 459 to 487, 512 to 540, and 666 to 743; these read KSQG…ATAY, DNQAVDTKSMEEPKVKAQPALRGVEPTED, NNTPNVVPPTQSKKKNKNETVSGMDENFD, and VDAL…EESK. Polar residues predominate over residues 211 to 224; it reads SQNQNENNDNQKYQ. 8 consecutive repeat copies span residues 226–231, 232–237, 238–243, 244–249, 250–255, 256–261, 262–267, and 268–273. An 8 X 6 AA tandem repeats of [VT]-N-D-[ED]-[ED]-D region spans residues 226 to 273; sequence VNDEDDVNDEEDTNDDEDTNDEEDTNDDEDTNDDEDTNDEEDTNDEED. Positions 226–274 are enriched in acidic residues; the sequence is VNDEDDVNDEEDTNDDEDTNDEEDTNDDEDTNDDEDTNDEEDTNDEEDH. Positions 364 to 528 are interaction with MSP1 and host SLC4A1/Band 3; the sequence is LKDNLINYEF…PPTQSKKKNK (165 aa). Residues 459–473 are compositionally biased toward basic and acidic residues; sequence DNQAVDTKSMEEPKV. The segment covering 512–521 has biased composition (low complexity); sequence NNTPNVVPPT. The stretch at 644–733 forms a coiled coil; the sequence is NQETEEEMEK…QEEEEEEEIV (90 aa). Basic and acidic residues predominate over residues 672–721; sequence KNKEEEEKEKEKEEKEKEEKEKEKEEKEKEEKEKEEKEKEEKEEEKKEKE. A compositionally biased stretch (acidic residues) spans 722 to 733; the sequence is EEQEEEEEEEIV.

The protein belongs to the plasmodium ABRA family. As to quaternary structure, forms a complex composed of MSP1, MSP6, MSP7, MSP9 and MSP3; within the complex, MSP6 and MSP9 mediate the binding to the host erythrocyte. Interacts with MSP1 subunits p19 and p42; the interaction is direct. Interacts with host SLC4A1/Band 3 protein (via the 5ABC region). MSP1 subunits p19 or p42, and MSP9 form a co-ligand complex that interacts with host SLC4A1/Band 3 protein. Post-translationally, not glycosylated.

Its subcellular location is the cell membrane. It is found in the parasitophorous vacuole lumen. The protein localises to the secreted. Functionally, during the asexual blood stage, involved in the sialic acid-independent (SAID) merozoite invasion of host erythrocytes by binding to host SLC4A1/Band 3 protein on the surface of the host erythrocyte. This chain is Merozoite surface protein 9, found in Plasmodium falciparum (isolate 3D7).